The primary structure comprises 47 residues: Type II secretion system protein N (47 aa).

Belongs to the GSP N family.

It is found in the cell inner membrane. Functionally, involved in a type II secretion system (T2SS, formerly general secretion pathway, GSP) for the export of proteins. In Aeromonas salmonicida, this protein is Type II secretion system protein N (exeN).